The sequence spans 205 residues: Transcriptional regulator GfcR (205 aa).

Belongs to the purine/pyrimidine phosphoribosyltransferase family. GfcR subfamily.

This is Transcriptional regulator GfcR from Methanococcus maripaludis (strain C7 / ATCC BAA-1331).